The primary structure comprises 344 residues: 3-isopropylmalate dehydrogenase (344 aa).

4 residues coordinate substrate: arginine 93, arginine 103, arginine 131, and aspartate 215. The Mg(2+) site is built by aspartate 215, aspartate 239, and aspartate 243. An NAD(+)-binding site is contributed by 273–285; the sequence is GSAPDIAGKGIAN.

The protein belongs to the isocitrate and isopropylmalate dehydrogenases family. LeuB type 1 subfamily. As to quaternary structure, homodimer. Mg(2+) serves as cofactor. The cofactor is Mn(2+).

It is found in the cytoplasm. It carries out the reaction (2R,3S)-3-isopropylmalate + NAD(+) = 4-methyl-2-oxopentanoate + CO2 + NADH. It participates in amino-acid biosynthesis; L-leucine biosynthesis; L-leucine from 3-methyl-2-oxobutanoate: step 3/4. Its function is as follows. Catalyzes the oxidation of 3-carboxy-2-hydroxy-4-methylpentanoate (3-isopropylmalate) to 3-carboxy-4-methyl-2-oxopentanoate. The product decarboxylates to 4-methyl-2 oxopentanoate. The chain is 3-isopropylmalate dehydrogenase from Streptococcus mutans serotype c (strain ATCC 700610 / UA159).